The chain runs to 333 residues: MLTYKEAGVNIEEGYRSVKLIKEYAKKTMSEYVLNGLGSFAGMVELPEGYKKPVLVSGTDGVGTKLDIACKKRKFDTVGIDCVAMCVNDILCHGAKPLFFLDYIACGKLEAEVSSDLVKGVAEGCIESQCSLIGGETAEMPGMYKEGDYDIAGFAVGIVDKDKIINGKDIKSGDKLIGIASSGVHSNGYSLIRKVFKNLDEDFNGKAIWEELLTPTKIYVKPVLSLLEKFNIKGMAHVTGGGFYENLPRMLSKEGLSIVINKNSYEIPEIFKKLMELGVKEEEMYNTFNMGIGFVLCVEEDEVEEVLKELSKQGEKAFEIGYINAGGEGVCIK.

This sequence belongs to the AIR synthase family.

Its subcellular location is the cytoplasm. It catalyses the reaction 2-formamido-N(1)-(5-O-phospho-beta-D-ribosyl)acetamidine + ATP = 5-amino-1-(5-phospho-beta-D-ribosyl)imidazole + ADP + phosphate + H(+). The protein operates within purine metabolism; IMP biosynthesis via de novo pathway; 5-amino-1-(5-phospho-D-ribosyl)imidazole from N(2)-formyl-N(1)-(5-phospho-D-ribosyl)glycinamide: step 2/2. The sequence is that of Phosphoribosylformylglycinamidine cyclo-ligase from Clostridium perfringens (strain ATCC 13124 / DSM 756 / JCM 1290 / NCIMB 6125 / NCTC 8237 / Type A).